We begin with the raw amino-acid sequence, 258 residues long: UPF0246 protein YaaA (258 aa).

Belongs to the UPF0246 family.

The polypeptide is UPF0246 protein YaaA (Escherichia coli (strain K12 / MC4100 / BW2952)).